The chain runs to 117 residues: Putative pterin-4-alpha-carbinolamine dehydratase (117 aa).

The protein belongs to the pterin-4-alpha-carbinolamine dehydratase family.

It catalyses the reaction (4aS,6R)-4a-hydroxy-L-erythro-5,6,7,8-tetrahydrobiopterin = (6R)-L-erythro-6,7-dihydrobiopterin + H2O. This chain is Putative pterin-4-alpha-carbinolamine dehydratase, found in Colwellia psychrerythraea (strain 34H / ATCC BAA-681) (Vibrio psychroerythus).